Reading from the N-terminus, the 787-residue chain is Longitudinals lacking protein, isoforms A/B/D/L (787 aa).

The BTB domain occupies Val32 to Gln97. Disordered regions lie at residues Leu115–Leu200, Ser228–Ser340, Ala506–Lys560, and Thr653–Gly677. Low complexity-rich tracts occupy residues Ser162–Pro175, Ser228–Thr251, Thr263–Ser293, Asn329–Ser340, His537–Lys560, and Ser659–Ser668. Residues His685–Glu707 form a C2H2-type 1; degenerate zinc finger. Residues Phe714 to His737 form a C2H2-type 2 zinc finger.

As to quaternary structure, isoform D interacts with JIL-1. As to expression, by stage 11, isoform B is expressed throughout the mesoderm, whereas isoform A, isoform D and isoform L are expressed throughout the ectoderm. Expression becomes restricted during later stages; starting from stage 14 to 16, isoform B is expressed in muscle. Isoform A, isoform D, and at low levels isoform B, are expressed in the CNS. Expression is also seen in specific types of cells in the embryo; isoform A and isoform L are expressed in a dynamic pattern in the ventral neurogenic region starting at stage 7. Isoform L is expressed around the tracheal pits at stage 11.

It is found in the nucleus. Putative transcription factor required for axon growth and guidance in the central and peripheral nervous systems. Repels CNS axons away from the midline by promoting the expression of the midline repellent sli and its receptor robo. This chain is Longitudinals lacking protein, isoforms A/B/D/L, found in Drosophila melanogaster (Fruit fly).